The primary structure comprises 564 residues: Pachytene checkpoint protein 2 (564 aa).

Residue 314 to 321 participates in ATP binding; it reads GPPGTGKT.

The protein belongs to the AAA ATPase family. PCH2 subfamily.

The protein resides in the nucleus. Its subcellular location is the nucleolus. It is found in the chromosome. Its function is as follows. Required for the pachytene checkpoint, the meiotic checkpoint that prevents chromosome segregation when defects in recombination and synaptonemal complex formation occurred. Represses meiotic recombination in the rDNA, probably by excluding the meiosis-specific protein HOP1 from the nucleolar region. In Saccharomyces cerevisiae (strain ATCC 204508 / S288c) (Baker's yeast), this protein is Pachytene checkpoint protein 2 (PCH2).